A 115-amino-acid polypeptide reads, in one-letter code: DNA-binding protein Ta0052 (115 aa).

Positions 1-41 (MDDDEELERIRRQQLESMQRQAMQEQMREEQEKQREAERAR) are disordered. Residues 15–25 (LESMQRQAMQE) are compositionally biased toward low complexity. The segment covering 26–41 (QMREEQEKQREAERAR) has biased composition (basic and acidic residues).

It belongs to the PDCD5 family.

This chain is DNA-binding protein Ta0052, found in Thermoplasma acidophilum (strain ATCC 25905 / DSM 1728 / JCM 9062 / NBRC 15155 / AMRC-C165).